The sequence spans 124 residues: Fluoride-specific ion channel FluC (124 aa).

The next 4 membrane-spanning stretches (helical) occupy residues 5–27 (LFVA…LMLQ), 42–62 (ILGS…EVSP), 63–83 (EIKA…STFS), and 95–115 (LVKA…VVYL). Na(+)-binding residues include Gly74 and Thr77.

The protein belongs to the fluoride channel Fluc/FEX (TC 1.A.43) family.

Its subcellular location is the cell inner membrane. The enzyme catalyses fluoride(in) = fluoride(out). Na(+) is not transported, but it plays an essential structural role and its presence is essential for fluoride channel function. In terms of biological role, fluoride-specific ion channel. Important for reducing fluoride concentration in the cell, thus reducing its toxicity. This Shewanella piezotolerans (strain WP3 / JCM 13877) protein is Fluoride-specific ion channel FluC.